Reading from the N-terminus, the 141-residue chain is Large ribosomal subunit protein bL17 (141 aa).

It belongs to the bacterial ribosomal protein bL17 family. In terms of assembly, part of the 50S ribosomal subunit. Contacts protein L32.

The polypeptide is Large ribosomal subunit protein bL17 (Bartonella bacilliformis (strain ATCC 35685 / KC583 / Herrer 020/F12,63)).